Consider the following 386-residue polypeptide: uncharacterized protein (386 aa).

A run of 11 helical transmembrane segments spans residues Trp-3 to Ile-23, Leu-42 to Trp-62, Phe-72 to Gly-92, Val-102 to Phe-122, Ile-145 to Phe-165, Phe-183 to Leu-203, Trp-212 to Leu-232, Thr-244 to Val-264, Ile-276 to Gly-296, Val-308 to Gly-328, and Leu-333 to Ser-353.

It to R.prowazekii RP382.

The protein localises to the cell membrane. This is an uncharacterized protein from Aquifex aeolicus (strain VF5).